The sequence spans 185 residues: A-type ATP synthase subunit E (185 aa).

It belongs to the V-ATPase E subunit family. Has multiple subunits with at least A(3), B(3), C, D, E, F, H, I and proteolipid K(x).

Its subcellular location is the cell membrane. Component of the A-type ATP synthase that produces ATP from ADP in the presence of a proton gradient across the membrane. The protein is A-type ATP synthase subunit E of Thermoplasma volcanium (strain ATCC 51530 / DSM 4299 / JCM 9571 / NBRC 15438 / GSS1).